Consider the following 600-residue polypeptide: Beta-hexosaminidase (600 aa).

The first 18 residues, 1 to 18 (MRISQICTVLSTVTSAVA), serve as a signal peptide directing secretion. A propeptide spanning residues 19–96 (VGVNPLPAPR…PFPTPTAGAS (78 aa)) is cleaved from the precursor. An O-linked (Man...) threonine glycan is attached at threonine 78. 2 O-linked (Man...) serine glycosylation sites follow: serine 83 and serine 84. Active-site charge relay system residues include aspartate 222 and histidine 275. An intrachain disulfide couples cysteine 290 to cysteine 351. A glycan (N-linked (HexNAc...) asparagine) is linked at asparagine 318. Glutamate 346 functions as the Charge relay system in the catalytic mechanism. Asparagine 353 carries N-linked (GlcNAc...) asparagine glycosylation. Asparagine 387 carries an N-linked (HexNAc...) asparagine glycan. The N-linked (GlcNAc...) asparagine glycan is linked to asparagine 428. Cysteines 448 and 483 form a disulfide. Asparagine 500 and asparagine 525 each carry an N-linked (GlcNAc...) asparagine glycan. Cysteine 583 and cysteine 590 are disulfide-bonded.

It belongs to the glycosyl hydrolase 20 family. Homodimer. Oligosaccharide moieties may also take part in the dimerization. Dimerization is a pH-dependent reversible process. The individual catalytic cores dimerize and the catalytic core of one subunit in the active dimer interacts with the propeptide of the second subunit. In terms of processing, the precursor of the propeptide is intracellularly processed in the endoplasmic reticulum by a dibasic peptidase, different from Kex2, removing Lys-97--Arg-101 from the precursor producing the activated propeptide. The propeptide binds non-covalently to the catalytic domain. Propeptide binding is necessary for full activation of the enzyme, dimerization of the catalytic domain and secretion of the active enzyme. Post-translationally, O-glycosylated. O-glycosylation (O-mannosylation) at the C-terminus of the propeptide is necessary for full enzyme activity. N-glycosylated. N-glycosylation of the catalytic domain increases the stability and solubility of the enzyme, especially at low pH. Contains high mannose-type (M4-M11) N-glycans at the C-terminus. N-glycan deglycosylation does not affect enzyme activity.

It localises to the secreted. It carries out the reaction Hydrolysis of terminal non-reducing N-acetyl-D-hexosamine residues in N-acetyl-beta-D-hexosaminides.. Its activity is regulated as follows. Activated by non-covalent binding of the propeptide to the catalytic domain. The concentration of the propeptide is regulated in the endoplasmic reticulum and the propeptide thus regulates the amount of the active enzyme at various stages of the growth cycle. The dimeric enzyme has about half of the maximal activity in the presence of one bound propeptide, but is fully active with two bound O-glycosylated propeptides. Inhibited by N-acetylglucosamine (NAG)-thiazoline. Its function is as follows. Selectively hydrolyzes GlcNAcbeta(1-&gt;4)GlcNAc (N,N'-diacetylchitobiose) and Gal-NAcbeta(1-&gt;4)GlcNAc, but not their C-2 epimers GlcNAcbeta(1-&gt;4)ManNAc or Gal-NAcbeta(1-&gt;4)ManNAc. However, hydrolyzes both GlcNAcbeta(1-&gt;6)GlcNAc and GlcNAcbeta(1-&gt;6)ManNAc. Part of the binary chitinolytic system. Involved in hydrolysis of chitobiose and higher chito-oligomers (produced from cell wall chitin by endochitinases), thus contributing to the formation of germ tubes, fruit-bodies and septa during hyphenation. Hydrolyzes synthetic substrate p-nitrophenyl-beta-N-acetyl-D-glucosaminide (pNP-GlcNAc). Hydrolyzes synthetic substrate p-nitrophenyl-beta-N-acetyl-D-galactosaminide (pNP-GalNAc). Hydrolyzes chromogenic substrate 4-nitrophenyl-2-acetamido-2-deoxyglucopyranoside. The sequence is that of Beta-hexosaminidase from Aspergillus oryzae (Yellow koji mold).